Reading from the N-terminus, the 361-residue chain is 3-dehydroquinate synthase (361 aa).

NAD(+) contacts are provided by residues 107-111, 131-132, K144, and K153; these read GVIGD and TS. Zn(2+) contacts are provided by E186, H251, and H268.

It belongs to the sugar phosphate cyclases superfamily. Dehydroquinate synthase family. Requires NAD(+) as cofactor. The cofactor is Co(2+). Zn(2+) is required as a cofactor.

It is found in the cytoplasm. It carries out the reaction 7-phospho-2-dehydro-3-deoxy-D-arabino-heptonate = 3-dehydroquinate + phosphate. It functions in the pathway metabolic intermediate biosynthesis; chorismate biosynthesis; chorismate from D-erythrose 4-phosphate and phosphoenolpyruvate: step 2/7. Functionally, catalyzes the conversion of 3-deoxy-D-arabino-heptulosonate 7-phosphate (DAHP) to dehydroquinate (DHQ). This Synechocystis sp. (strain ATCC 27184 / PCC 6803 / Kazusa) protein is 3-dehydroquinate synthase.